A 1179-amino-acid polypeptide reads, in one-letter code: ATP-dependent helicase/deoxyribonuclease subunit B (1179 aa).

Belongs to the helicase family. AddB/RexB type 2 subfamily. As to quaternary structure, heterodimer of AddA and RexB. Mg(2+) is required as a cofactor.

The heterodimer acts as both an ATP-dependent DNA helicase and an ATP-dependent, dual-direction single-stranded exonuclease. Recognizes the chi site generating a DNA molecule suitable for the initiation of homologous recombination. This subunit has 5' -&gt; 3' nuclease activity but not helicase activity. This chain is ATP-dependent helicase/deoxyribonuclease subunit B, found in Lactobacillus delbrueckii subsp. bulgaricus (strain ATCC 11842 / DSM 20081 / BCRC 10696 / JCM 1002 / NBRC 13953 / NCIMB 11778 / NCTC 12712 / WDCM 00102 / Lb 14).